Here is a 310-residue protein sequence, read N- to C-terminus: Malate dehydrogenase (310 aa).

Residues 7–12 (GAGHVG) and aspartate 32 contribute to the NAD(+) site. Positions 81 and 87 each coordinate substrate. Residues asparagine 94 and 117 to 119 (VSN) contribute to the NAD(+) site. Substrate-binding residues include asparagine 119 and arginine 150. Histidine 174 acts as the Proton acceptor in catalysis.

This sequence belongs to the LDH/MDH superfamily. MDH type 3 family.

The catalysed reaction is (S)-malate + NAD(+) = oxaloacetate + NADH + H(+). Its function is as follows. Catalyzes the reversible oxidation of malate to oxaloacetate. This chain is Malate dehydrogenase, found in Chlorobium phaeobacteroides (strain BS1).